A 29-amino-acid chain; its full sequence is GLPICGETCVGGSCNTPGCSCSWPVCTRN.

A cross-link (cyclopeptide (Gly-Asn)) is located at residues 1–29 (GLPICGETCVGGSCNTPGCSCSWPVCTRN). 3 disulfide bridges follow: C5–C19, C9–C21, and C14–C26.

This is a cyclic peptide.

Probably participates in a plant defense mechanism. This chain is Varv peptide D, found in Viola arvensis (European field pansy).